The chain runs to 350 residues: Anthranilate phosphoribosyltransferase (350 aa).

Residues Gly-81, 84-85, Thr-89, 91-94, 109-117, and Ser-121 each bind 5-phospho-alpha-D-ribose 1-diphosphate; these read GD, NIST, and KHGGRSVSS. Anthranilate is bound at residue Gly-81. Ser-93 contributes to the Mg(2+) binding site. Arg-167 is an anthranilate binding site. Mg(2+) contacts are provided by Asp-230 and Glu-231.

This sequence belongs to the anthranilate phosphoribosyltransferase family. As to quaternary structure, homodimer. The cofactor is Mg(2+).

It catalyses the reaction N-(5-phospho-beta-D-ribosyl)anthranilate + diphosphate = 5-phospho-alpha-D-ribose 1-diphosphate + anthranilate. It participates in amino-acid biosynthesis; L-tryptophan biosynthesis; L-tryptophan from chorismate: step 2/5. Catalyzes the transfer of the phosphoribosyl group of 5-phosphorylribose-1-pyrophosphate (PRPP) to anthranilate to yield N-(5'-phosphoribosyl)-anthranilate (PRA). The sequence is that of Anthranilate phosphoribosyltransferase from Nitrosospira multiformis (strain ATCC 25196 / NCIMB 11849 / C 71).